Consider the following 231-residue polypeptide: Flagellar L-ring protein (231 aa).

The first 20 residues, 1 to 20, serve as a signal peptide directing secretion; the sequence is MTYRRIPLYLSCLFLLALSG. Residue Cys21 is the site of N-palmitoyl cysteine attachment. Residue Cys21 is the site of S-diacylglycerol cysteine attachment.

It belongs to the FlgH family. In terms of assembly, the basal body constitutes a major portion of the flagellar organelle and consists of four rings (L,P,S, and M) mounted on a central rod.

The protein resides in the cell outer membrane. The protein localises to the bacterial flagellum basal body. Functionally, assembles around the rod to form the L-ring and probably protects the motor/basal body from shearing forces during rotation. This is Flagellar L-ring protein from Desulfotalea psychrophila (strain LSv54 / DSM 12343).